The chain runs to 270 residues: Surfeit locus protein 4 homolog (270 aa).

A run of 6 helical transmembrane segments spans residues 65-85 (FLAT…CGMV), 93-113 (IAVG…SILW), 115-135 (FQFL…LAEA), 178-198 (LSVW…LVVL), 206-226 (ALIL…WWTI), and 243-263 (TLSV…GVSM). The short motif at 267–270 (KKKW) is the Di-lysine motif element.

It belongs to the SURF4 family.

The protein resides in the endoplasmic reticulum membrane. Its function is as follows. Endoplasmic reticulum cargo receptor that mediates the export of lipoproteins by recruiting cargos into COPII vesicles to facilitate their secretion. The sequence is that of Surfeit locus protein 4 homolog from Drosophila melanogaster (Fruit fly).